Here is a 316-residue protein sequence, read N- to C-terminus: UDP-N-acetyl-2-amino-2-deoxy-D-glucuronate oxidase (316 aa).

Residues 11–13 (GYI), 32–37 (YDINDS), Glu55, 81–84 (NYLH), 101–102 (EK), Gln130, and 171–172 (WK) contribute to the NAD(+) site.

The protein belongs to the Gfo/Idh/MocA family. In terms of assembly, homotetramer.

The catalysed reaction is UDP-2-acetamido-2-deoxy-alpha-D-glucuronate + NAD(+) = UDP-2-acetamido-2-deoxy-alpha-D-ribo-hex-3-uluronate + NADH + H(+). It carries out the reaction 2-hydroxyglutarate + NAD(+) = 2-oxoglutarate + NADH + H(+). The protein operates within bacterial outer membrane biogenesis; LPS O-antigen biosynthesis. Its function is as follows. Plays a role in the biosynthesis of B-band O antigen for serotype O5. Catalyzes the NAD-dependent oxidation of UDP-N-acetylglucosaminuronic acid (UDP-D-GlcNAcA) to UDP-2-acetamido-2-deoxy-3-oxo-D-glucuronic acid (UDP-3-oxo-D-GlcNAcA). Cannot use UDP-GlcNAc or UDP-GalNAc as the nucleotide sugar substrate, and can use only poorly UDP-D-glucuronic acid (UDP-GlcA). Undergoes an NAD(+) recycling mechanism using 2-oxoglutarate as an oxidant. This chain is UDP-N-acetyl-2-amino-2-deoxy-D-glucuronate oxidase, found in Pseudomonas aeruginosa (strain ATCC 15692 / DSM 22644 / CIP 104116 / JCM 14847 / LMG 12228 / 1C / PRS 101 / PAO1).